The chain runs to 184 residues: Endoribonuclease YbeY (184 aa).

Composition is skewed to acidic residues over residues 1-11 (MTVEVGADENP) and 19-29 (DGAGDESDDED). Residues 1–37 (MTVEVGADENPDFAHDETDGAGDESDDEDAQGRDPEL) are disordered. Zn(2+)-binding residues include H146, H150, and H156.

It belongs to the endoribonuclease YbeY family. The cofactor is Zn(2+).

The protein localises to the cytoplasm. Functionally, single strand-specific metallo-endoribonuclease involved in late-stage 70S ribosome quality control and in maturation of the 3' terminus of the 16S rRNA. The sequence is that of Endoribonuclease YbeY from Burkholderia mallei (strain ATCC 23344).